The sequence spans 155 residues: Endoribonuclease YbeY (155 aa).

Positions 64–84 are disordered; it reads SFPMDEMRAPGDDEDPPSGLL. Zn(2+)-binding residues include histidine 115, histidine 119, and histidine 125.

Belongs to the endoribonuclease YbeY family. The cofactor is Zn(2+).

The protein resides in the cytoplasm. In terms of biological role, single strand-specific metallo-endoribonuclease involved in late-stage 70S ribosome quality control and in maturation of the 3' terminus of the 16S rRNA. The chain is Endoribonuclease YbeY from Cutibacterium acnes (strain DSM 16379 / KPA171202) (Propionibacterium acnes).